Consider the following 293-residue polypeptide: Epidermal growth factor-like protein 8 (293 aa).

The N-terminal stretch at 1–25 (MGSRAELCTLLGGFSFLLLLIPGEG) is a signal peptide. The region spanning 34–112 (SQGVCSKQTL…RHPGALTCEA (79 aa)) is the EMI domain. Intrachain disulfides connect cysteine 38/cysteine 97, cysteine 65/cysteine 71, cysteine 96/cysteine 110, cysteine 114/cysteine 124, cysteine 118/cysteine 130, cysteine 132/cysteine 141, cysteine 148/cysteine 159, cysteine 155/cysteine 168, and cysteine 170/cysteine 183. Residue asparagine 50 is glycosylated (N-linked (GlcNAc...) asparagine). The EGF-like 1 domain occupies 111-142 (EAICAKPCLNGGVCVRPDQCECAPGWGGKHCH). The region spanning 144 to 184 (DVDECRTSITLCSHHCFNTAGSFTCGCPHDLVLGVDGRTCM) is the EGF-like 2; calcium-binding domain. Residues 195-232 (SILSVAVREAEKDERALKQEIHELRGRLERLEQWAGQA) adopt a coiled-coil conformation.

It localises to the secreted. The chain is Epidermal growth factor-like protein 8 (EGFL8) from Homo sapiens (Human).